The sequence spans 314 residues: DNA-directed RNA polymerase subunit alpha (314 aa).

The segment at Met1 to Thr228 is alpha N-terminal domain (alpha-NTD). Residues Lys245–Asp314 form an alpha C-terminal domain (alpha-CTD) region.

This sequence belongs to the RNA polymerase alpha chain family. In terms of assembly, homodimer. The RNAP catalytic core consists of 2 alpha, 1 beta, 1 beta' and 1 omega subunit. When a sigma factor is associated with the core the holoenzyme is formed, which can initiate transcription.

The catalysed reaction is RNA(n) + a ribonucleoside 5'-triphosphate = RNA(n+1) + diphosphate. In terms of biological role, DNA-dependent RNA polymerase catalyzes the transcription of DNA into RNA using the four ribonucleoside triphosphates as substrates. This chain is DNA-directed RNA polymerase subunit alpha, found in Staphylococcus epidermidis (strain ATCC 35984 / DSM 28319 / BCRC 17069 / CCUG 31568 / BM 3577 / RP62A).